A 211-amino-acid chain; its full sequence is MLTIAIPKGALLSDAIKLFQSIGLDFSAFLDPKNRQLQITDPTNTAKALLVRATDVPVYVEYGQAQLGIVGYDLLLEKTPTVANLANLKFGYCRMSVAVPASSPYKSPVELPPNGKVASKFVNCAKKYFHTLDLPVEIIPLYGSVELGPITGMSEAIVDLVSTGRTLKENGLIEIDTLFESTAHLIAHPLSYRLNLDQINPWVTKIRDTLS.

Belongs to the ATP phosphoribosyltransferase family. Short subfamily. Heteromultimer composed of HisG and HisZ subunits.

It localises to the cytoplasm. The catalysed reaction is 1-(5-phospho-beta-D-ribosyl)-ATP + diphosphate = 5-phospho-alpha-D-ribose 1-diphosphate + ATP. It participates in amino-acid biosynthesis; L-histidine biosynthesis; L-histidine from 5-phospho-alpha-D-ribose 1-diphosphate: step 1/9. Its function is as follows. Catalyzes the condensation of ATP and 5-phosphoribose 1-diphosphate to form N'-(5'-phosphoribosyl)-ATP (PR-ATP). Has a crucial role in the pathway because the rate of histidine biosynthesis seems to be controlled primarily by regulation of HisG enzymatic activity. The chain is ATP phosphoribosyltransferase from Rippkaea orientalis (strain PCC 8801 / RF-1) (Cyanothece sp. (strain PCC 8801)).